Here is a 265-residue protein sequence, read N- to C-terminus: Apolipoprotein A-I (265 aa).

Positions 1 to 18 are cleaved as a signal peptide; sequence MKALVLTLAVLFFTGSQA. Tandem repeats lie at residues 67–88 and 89–110. The 10 X approximate tandem repeats stretch occupies residues 67–265; the sequence is LKLLDNWDSL…DEASKKLNAQ (199 aa). Position 109 is a methionine sulfoxide (Met109). The stretch at 111–121 is one 3; half-length repeat; sequence KDLEEVKQKVQ. 5 consecutive repeat copies span residues 122 to 142, 144 to 165, 166 to 187, 188 to 209, and 210 to 230. Residues 231-241 form a 9; half-length repeat; it reads PALEDLRQGLL. Repeat 10 spans residues 242–265; it reads PVLESLKVSILAAIDEASKKLNAQ.

Belongs to the apolipoprotein A1/A4/E family. Homodimer. Interacts with APOA1BP and CLU. Component of a sperm activating protein complex (SPAP), consisting of APOA1, an immunoglobulin heavy chain, an immunoglobulin light chain and albumin. Interacts with NDRG1. Interacts with SCGB3A2. Interacts with NAXE and YJEFN3. In terms of processing, glycosylated. Palmitoylated. Post-translationally, phosphorylation sites are present in the extracellular medium. In terms of tissue distribution, major protein of plasma HDL, also found in chylomicrons.

The protein localises to the secreted. Functionally, participates in the reverse transport of cholesterol from tissues to the liver for excretion by promoting cholesterol efflux from tissues and by acting as a cofactor for the lecithin cholesterol acyltransferase (LCAT). As part of the SPAP complex, activates spermatozoa motility. This chain is Apolipoprotein A-I (APOA1), found in Physeter macrocephalus (Sperm whale).